An 844-amino-acid chain; its full sequence is Probable serine/threonine-protein kinase DDB_G0267566 (844 aa).

ANK repeat units lie at residues 335–367 (KGDTALHNTIKNLKKESGPMVAALLSCGANANI) and 371–400 (KHKVPLHFAIEFGDESIIKILLAFGAKPFL). The region spanning 508–773 (SELGKLIGKG…FEVFQKLKKV (266 aa)) is the Protein kinase domain. ATP contacts are provided by residues 514 to 522 (IGKGANGKV) and Lys539. Asp634 (proton acceptor) is an active-site residue.

Belongs to the protein kinase superfamily. Ser/Thr protein kinase family.

The enzyme catalyses L-seryl-[protein] + ATP = O-phospho-L-seryl-[protein] + ADP + H(+). It catalyses the reaction L-threonyl-[protein] + ATP = O-phospho-L-threonyl-[protein] + ADP + H(+). The polypeptide is Probable serine/threonine-protein kinase DDB_G0267566 (Dictyostelium discoideum (Social amoeba)).